The primary structure comprises 364 residues: Aminomethyltransferase (364 aa).

The protein belongs to the GcvT family. As to quaternary structure, the glycine cleavage system is composed of four proteins: P, T, L and H.

The catalysed reaction is N(6)-[(R)-S(8)-aminomethyldihydrolipoyl]-L-lysyl-[protein] + (6S)-5,6,7,8-tetrahydrofolate = N(6)-[(R)-dihydrolipoyl]-L-lysyl-[protein] + (6R)-5,10-methylene-5,6,7,8-tetrahydrofolate + NH4(+). The glycine cleavage system catalyzes the degradation of glycine. The protein is Aminomethyltransferase of Bacillus licheniformis (strain ATCC 14580 / DSM 13 / JCM 2505 / CCUG 7422 / NBRC 12200 / NCIMB 9375 / NCTC 10341 / NRRL NRS-1264 / Gibson 46).